The sequence spans 423 residues: Transmembrane protease serine 11E (423 aa).

Residues 1 to 18 (MYRSCVVRARKRTCVEPW) are Cytoplasmic-facing. Residues 19–39 (VIGIISFLSLIVLAVCIGLTV) traverse the membrane as a helical; Signal-anchor for type II membrane protein segment. The Extracellular portion of the chain corresponds to 40-423 (HYVRYNHRRT…RHWIASNTGI (384 aa)). The 119-residue stretch at 48-166 (RTYNYYSTLS…ESVKIKKINK (119 aa)) folds into the SEA domain. Residues Asn-74, Asn-165, Asn-182, and Asn-223 are each glycosylated (N-linked (GlcNAc...) asparagine). 4 disulfide bridges follow: Cys-176–Cys-297, Cys-217–Cys-233, Cys-342–Cys-358, and Cys-369–Cys-398. Residues 192–422 (IVGGTPVEEE…FRHWIASNTG (231 aa)) form the Peptidase S1 domain. Catalysis depends on charge relay system residues His-232 and Asp-277. The active-site Charge relay system is Ser-373.

The protein belongs to the peptidase S1 family. Forms a heterodimer with SERPINA5 and SERPINE1. N-glycosylated. In terms of tissue distribution, expressed in epidermal, oral and male reproductive tissues.

It is found in the cell membrane. Its subcellular location is the secreted. Its activity is regulated as follows. Inhibited by SERPINA5. Serine protease which possesses both gelatinolytic and caseinolytic activities. Shows a preference for Arg in the P1 position. This Mus musculus (Mouse) protein is Transmembrane protease serine 11E (Tmprss11e).